Here is a 547-residue protein sequence, read N- to C-terminus: Elongator complex protein 3 (547 aa).

In terms of domain architecture, Radical SAM core spans 82–372; it reads RTASGIAVVA…YRVQRDIPMP (291 aa). [4Fe-4S] cluster is bound by residues Cys99, Cys109, and Cys112. Residue Ser161 is modified to Phosphoserine. Lys164 contacts acetyl-CoA. Tyr202 carries the post-translational modification Phosphotyrosine. Lys229 carries the post-translational modification N6-methyllysine. Phosphotyrosine is present on Tyr251. The 152-residue stretch at 396–547 folds into the N-acetyltransferase domain; the sequence is IQCRDVRTRE…QGPYMVKTLE (152 aa). Acetyl-CoA contacts are provided by residues 474–477, 497–499, and Tyr530; these read ELHV and FGM.

It belongs to the ELP3 family. In terms of assembly, component of the elongator complex which consists of ELP1, ELP2, ELP3, ELP4, ELP5 and ELP6. ELP1, ELP2 and ELP3 form the elongator core complex. Interacts with alpha-tubulin. Requires [4Fe-4S] cluster as cofactor. In terms of processing, tyrosine-phosphorylated; phosphorylation on Tyr-202 does not affect elongator complex integrity or ELP3 protein stability. Also serine/threonine-phosphorylated.

It is found in the cytoplasm. The protein resides in the nucleus. The catalysed reaction is uridine(34) in tRNA + acetyl-CoA + S-adenosyl-L-methionine + H2O = 5-(carboxymethyl)uridine(34) in tRNA + 5'-deoxyadenosine + L-methionine + CoA + 2 H(+). Its pathway is tRNA modification; 5-methoxycarbonylmethyl-2-thiouridine-tRNA biosynthesis. Its function is as follows. Catalytic tRNA acetyltransferase subunit of the elongator complex which is required for multiple tRNA modifications, including mcm5U (5-methoxycarbonylmethyl uridine), mcm5s2U (5-methoxycarbonylmethyl-2-thiouridine), and ncm5U (5-carbamoylmethyl uridine). In the elongator complex, acts as a tRNA uridine(34) acetyltransferase by mediating formation of carboxymethyluridine in the wobble base at position 34 in tRNAs. May also act as a protein lysine acetyltransferase by mediating acetylation of target proteins; such activity is however unclear in vivo and recent evidences suggest that ELP3 primarily acts as a tRNA acetyltransferase. Involved in neurogenesis: regulates the migration and branching of projection neurons in the developing cerebral cortex, through a process depending on alpha-tubulin acetylation. Required for acetylation of GJA1 in the developing cerebral cortex. The sequence is that of Elongator complex protein 3 from Bos taurus (Bovine).